Reading from the N-terminus, the 179-residue chain is uncharacterized protein (179 aa).

A run of 4 helical transmembrane segments spans residues 9-31 (WILV…VSTL), 41-63 (AFLL…YGSF), 114-136 (AYYG…LLGA), and 146-168 (AFWG…NYLM).

The protein localises to the cell membrane. This is an uncharacterized protein from Aquifex aeolicus (strain VF5).